A 260-amino-acid polypeptide reads, in one-letter code: Small ribosomal subunit protein uS2 (260 aa).

This sequence belongs to the universal ribosomal protein uS2 family.

This is Small ribosomal subunit protein uS2 (rpsB) from Borreliella burgdorferi (strain ATCC 35210 / DSM 4680 / CIP 102532 / B31) (Borrelia burgdorferi).